Reading from the N-terminus, the 107-residue chain is Large ribosomal subunit protein uL24 (107 aa).

It belongs to the universal ribosomal protein uL24 family. In terms of assembly, part of the 50S ribosomal subunit.

Functionally, one of two assembly initiator proteins, it binds directly to the 5'-end of the 23S rRNA, where it nucleates assembly of the 50S subunit. In terms of biological role, one of the proteins that surrounds the polypeptide exit tunnel on the outside of the subunit. In Natranaerobius thermophilus (strain ATCC BAA-1301 / DSM 18059 / JW/NM-WN-LF), this protein is Large ribosomal subunit protein uL24.